The chain runs to 356 residues: MPREKPRADEIAIEMMSVCEDETEVEQDPRELYEEEMKEQQQIDCSKQQKEVVAIEELEKRNINKHFFSIQPNTQIPVISSNYIAPVDTSRLLVLIGKTKATYPIMKMFSLSVLAGMLLSVGGLLSITIGKGIPSSDIGIQKIVFGFFNSVGLNLVVLCGGELFTSNCAFLIPGFMEGAYSRWLFFKTHFVVYFGNLVGSIFVSTYFGKLLGSFESPMYLSAVKQIGETKVAMNWGRALLSGIGCNWLVCCAVYFSASAKDLLSKLVVISFLVLTFASLEFENCVGNMFLLSLSHMYGGNFTLGQWILNNLIPVSIGNFIGGTFLLGIPLWYVHVSNVYNIPFLDPLYQQSQAKTQ.

Residues 1-108 (MPREKPRADE…TKATYPIMKM (108 aa)) are Cytoplasmic-facing. A helical transmembrane segment spans residues 109–129 (FSLSVLAGMLLSVGGLLSITI). Residues 130 to 142 (GKGIPSSDIGIQK) lie on the Extracellular side of the membrane. Residues 143-163 (IVFGFFNSVGLNLVVLCGGEL) traverse the membrane as a helical segment. The Cytoplasmic portion of the chain corresponds to 164–182 (FTSNCAFLIPGFMEGAYSR). The chain crosses the membrane as a helical span at residues 183 to 203 (WLFFKTHFVVYFGNLVGSIFV). At 204-237 (STYFGKLLGSFESPMYLSAVKQIGETKVAMNWGR) the chain is on the extracellular side. A helical membrane pass occupies residues 238-258 (ALLSGIGCNWLVCCAVYFSAS). At 259 to 265 (AKDLLSK) the chain is on the cytoplasmic side. The chain crosses the membrane as a helical span at residues 266–286 (LVVISFLVLTFASLEFENCVG). Topologically, residues 287–310 (NMFLLSLSHMYGGNFTLGQWILNN) are extracellular. The chain crosses the membrane as a helical span at residues 311-331 (LIPVSIGNFIGGTFLLGIPLW). Topologically, residues 332 to 356 (YVHVSNVYNIPFLDPLYQQSQAKTQ) are cytoplasmic.

This sequence belongs to the FNT transporter (TC 1.A.16) family. As to quaternary structure, homopentamer.

Its subcellular location is the membrane. The catalysed reaction is (S)-lactate(in) + H(+)(in) = (S)-lactate(out) + H(+)(out). It carries out the reaction formate(in) + H(+)(in) = formate(out) + H(+)(out). The enzyme catalyses pyruvate(out) + H(+)(out) = pyruvate(in) + H(+)(in). It catalyses the reaction acetate(out) + H(+)(out) = acetate(in) + H(+)(in). Functionally, monocarboxylate-proton symporter; active in acidic-to-neutral pH range. Transports formate, acetate and L-lactate. This is Formate-nitrite transporter from Entamoeba histolytica (strain ATCC 30459 / HM-1:IMSS / ABRM).